Reading from the N-terminus, the 229-residue chain is uncharacterized protein (229 aa).

The region spanning 2 to 69 (QRLAKLISNA…KSRLWIYYKP (68 aa)) is the S4 RNA-binding domain. The Nucleophile role is filled by aspartate 102.

It belongs to the pseudouridine synthase RsuA family.

The enzyme catalyses a uridine in RNA = a pseudouridine in RNA. This is an uncharacterized protein from Rickettsia bellii (strain RML369-C).